A 209-amino-acid chain; its full sequence is rRNA N(6)-adenosine-methyltransferase METTL5 (209 aa).

Residues Gln-28, Thr-31, Gly-59, Cys-62, Val-64, Asp-81, and 108–109 (DV) contribute to the S-adenosyl-L-methionine site.

Belongs to the methyltransferase superfamily. PrmA family. Heterodimer; heterodimerizes with TRMT112. In terms of tissue distribution, ubiquitously expressed in brain.

Its subcellular location is the nucleus. It localises to the presynapse. The protein resides in the postsynapse. The enzyme catalyses adenosine(1832) in 18S rRNA + S-adenosyl-L-methionine = N(6)-methyladenosine(1832) in 18S rRNA + S-adenosyl-L-homocysteine + H(+). RRNA N6-adenosine-methyltransferase activity is inhibited by zinc. Its function is as follows. Catalytic subunit of a heterodimer with TRMT112, which specifically methylates the 6th position of adenine in position 1832 of 18S rRNA. N6-methylation of adenine(1832) in 18S rRNA resides in the decoding center of 18S rRNA and is required for translation and embryonic stem cells (ESCs) pluripotency and differentiation. The protein is rRNA N(6)-adenosine-methyltransferase METTL5 of Mus musculus (Mouse).